Consider the following 439-residue polypeptide: L-tryptophan decarboxylase (439 aa).

This sequence belongs to the phosphatidylserine decarboxylase family.

The enzyme catalyses L-tryptophan + H(+) = tryptamine + CO2. The protein operates within secondary metabolite biosynthesis. In terms of biological role, L-tryptophan decarboxylase; part of the gene cluster that mediates the biosynthesis of psilocybin, a psychotropic tryptamine-derived natural product. The first step in the pathway is the decarboxylation of L-tryptophan to tryptamine by the decarboxylase psiD. 4-hydroxy-L-tryptophan is accepted as substrate by psiD as well. The cytochrome P450 monooxygenase psiH then converts tryptamine to 4-hydroxytryptamine. The kinase psiK catalyzes the 4-O-phosphorylation step by converting 4-hydroxytryptamine into norbaeocystin. The methyltransferase psiM then catalyzes iterative methyl transfer to the amino group of norbaeocystin to yield psilocybin via a monomethylated intermediate, baeocystin. 4-hydroxy-6-methyl-l-tryptophancan also be converted the decarboxylase PsiD, kinase PsiK, and methyltransferase PsiM into respectively 6-methyl-norbaeocystin, 6-methylbaeocystin, and 6-methylpsilocybin. The polypeptide is L-tryptophan decarboxylase (Psilocybe cubensis (Psychedelic mushroom)).